The sequence spans 312 residues: Dihydroorotate dehydrogenase B (NAD(+)), catalytic subunit (312 aa).

FMN contacts are provided by residues Ser21 and 45–46; that span reads KA. Residues Lys45 and 69-73 each bind substrate; that span reads NAIGL. 2 residues coordinate FMN: Asn99 and Asn127. Asn127 contributes to the substrate binding site. Residue Cys130 is the Nucleophile of the active site. Lys165 and Ile191 together coordinate FMN. Residue 192-193 coordinates substrate; that stretch reads NT. FMN contacts are provided by residues Gly217, 243–244, and 265–266; these read GG and GT.

It belongs to the dihydroorotate dehydrogenase family. Type 1 subfamily. In terms of assembly, heterotetramer of 2 PyrK and 2 PyrD type B subunits. FMN is required as a cofactor.

It localises to the cytoplasm. It catalyses the reaction (S)-dihydroorotate + NAD(+) = orotate + NADH + H(+). Its pathway is pyrimidine metabolism; UMP biosynthesis via de novo pathway; orotate from (S)-dihydroorotate (NAD(+) route): step 1/1. Functionally, catalyzes the conversion of dihydroorotate to orotate with NAD(+) as electron acceptor. This chain is Dihydroorotate dehydrogenase B (NAD(+)), catalytic subunit (pyrD), found in Anoxybacillus flavithermus (strain DSM 21510 / WK1).